A 305-amino-acid chain; its full sequence is MSATLPDVAVTEPSTLSAPLRWVGMQDIAIPVQLEAGGGQLAARASVQVDLPRAELKGIHMSRLYRLLDTQLQQPVSPAMLSGLLQALIESHADCASRAARLTLSGELMLRTPALRSEGLSGWRAYPVHIAAQCSAGRTTIQLQAEVLYASTCPCSAALSRQLLSDAFVQQHAGRDALALDEVAQWLQDHGSYATPHSQRSVAQVRVELPADAQRLAIRQLVGLCEQALATPVQAAVRRPDEQAFARLNGANLMYVEDAARRLRQQLAEHYAAFHVAVRHLESLHAHDAVAETDSDDAVLGPTTM.

The protein belongs to the GTP cyclohydrolase IV family.

The enzyme catalyses GTP + H2O = 7,8-dihydroneopterin 3'-triphosphate + formate + H(+). The protein operates within cofactor biosynthesis; 7,8-dihydroneopterin triphosphate biosynthesis; 7,8-dihydroneopterin triphosphate from GTP: step 1/1. In terms of biological role, converts GTP to 7,8-dihydroneopterin triphosphate. The polypeptide is GTP cyclohydrolase FolE2 (Xanthomonas euvesicatoria pv. vesicatoria (strain 85-10) (Xanthomonas campestris pv. vesicatoria)).